Reading from the N-terminus, the 197-residue chain is Segregation and condensation protein B (197 aa).

This sequence belongs to the ScpB family. In terms of assembly, homodimer. Homodimerization may be required to stabilize the binding of ScpA to the Smc head domains. Component of a cohesin-like complex composed of ScpA, ScpB and the Smc homodimer, in which ScpA and ScpB bind to the head domain of Smc. The presence of the three proteins is required for the association of the complex with DNA.

The protein resides in the cytoplasm. Its function is as follows. Participates in chromosomal partition during cell division. May act via the formation of a condensin-like complex containing Smc and ScpA that pull DNA away from mid-cell into both cell halves. This is Segregation and condensation protein B from Bacillus pumilus (strain SAFR-032).